The sequence spans 750 residues: GTP pyrophosphokinase rsh (750 aa).

An HD domain is found at 45 to 144 (YFSHPLEVAA…VKLADRLHNM (100 aa)). The TGS domain maps to 390 to 451 (DQVFCFTPKG…KNGDEVDIIR (62 aa)). The disordered stretch occupies residues 587–613 (AAKVDPAATTPKPGKRALPIRGTNPDL). The 75-residue stretch at 676-750 (RISVSAINSP…SVSSAKRVNG (75 aa)) folds into the ACT domain.

It belongs to the RelA/SpoT family.

The enzyme catalyses GTP + ATP = guanosine 3'-diphosphate 5'-triphosphate + AMP. Its function is as follows. Functions as a (p)ppGpp synthase. In eubacteria ppGpp (guanosine 3'-diphosphate 5'-diphosphate) is a mediator of the stringent response that coordinates a variety of cellular activities in response to changes in nutritional abundance. Plays a role in adaptation of Brucella to its intracellular host environment. The chain is GTP pyrophosphokinase rsh (rsh) from Brucella abortus (strain 2308).